The sequence spans 182 residues: Glycerol-3-phosphate acyltransferase 1 (182 aa).

The next 5 membrane-spanning stretches (helical) occupy residues 5–25 (MQFL…AYIV), 54–74 (GYFI…VAVA), 81–101 (PTFV…PVLF), 117–137 (IAFD…FYLI), and 157–177 (ILYS…VLIL).

The protein belongs to the PlsY family. In terms of assembly, probably interacts with PlsX.

It is found in the cell membrane. The catalysed reaction is an acyl phosphate + sn-glycerol 3-phosphate = a 1-acyl-sn-glycero-3-phosphate + phosphate. Its pathway is lipid metabolism; phospholipid metabolism. In terms of biological role, catalyzes the transfer of an acyl group from acyl-phosphate (acyl-PO(4)) to glycerol-3-phosphate (G3P) to form lysophosphatidic acid (LPA). This enzyme utilizes acyl-phosphate as fatty acyl donor, but not acyl-CoA or acyl-ACP. The protein is Glycerol-3-phosphate acyltransferase 1 of Bacillus cereus (strain ATCC 14579 / DSM 31 / CCUG 7414 / JCM 2152 / NBRC 15305 / NCIMB 9373 / NCTC 2599 / NRRL B-3711).